A 747-amino-acid chain; its full sequence is Superkiller protein 7 (747 aa).

The interval 14-51 (KSKGLLSADQSHSTSKSASLLERLHKNRETKDNNAETK) is disordered. Residues 21–31 (ADQSHSTSKSA) show a composition bias toward polar residues. The span at 35 to 51 (ERLHKNRETKDNNAETK) shows a compositional bias: basic and acidic residues. 2 positions are modified to phosphoserine: Ser88 and Ser90. A disordered region spans residues 89-117 (NSDLEKQGKSVTLDSKENELPTKRKSPDD). The tr-type G domain occupies 265–503 (PLNLTCLFLG…YVPEWYEGPT (239 aa)). Residues 274-281 (GDTNAGKS) are G1. 274–281 (GDTNAGKS) is a binding site for GTP. The interval 331 to 335 (GFSMF) is G2. The segment at 356-359 (DTPG) is G3. GTP-binding positions include 356-360 (DTPGS) and 427-430 (NKAD). The G4 stretch occupies residues 427 to 430 (NKAD). The tract at residues 467–469 (SGL) is G5.

Belongs to the TRAFAC class translation factor GTPase superfamily. Classic translation factor GTPase family. As to quaternary structure, interacts with the exosome and with the SKI complex composed of at least SKI2, SKI3 and SKI8. Interacts directly with SKI3 and SKI8.

The protein localises to the cytoplasm. Represses the expression of non-poly(A) mRNAs like L-A or M viruses and is therefore involved in antiviral system. Mediates interactions via its N-terminus between the exosome and the SKI complex which operate in the 3'-to-5' mRNA-decay pathway. By interacting with NAM7, is also required for nonsense-mediated 3'-to-5' mRNA-decay (NMD). May recognize a stalled 80S ribosome at the 3'-end of a nonstop mRNA which leads to the recruitment of the exosome and SKI complexes to the mRNAs to be degraded. This is Superkiller protein 7 (SKI7) from Saccharomyces cerevisiae (strain ATCC 204508 / S288c) (Baker's yeast).